The chain runs to 300 residues: Geranyl diphosphate 2-C-methyltransferase (300 aa).

The tract at residues 1 to 24 (MAAASAPVPGPGGASSTARGRIPA) is disordered.

This sequence belongs to the geranyl diphosphate 2-C-methyltransferase family. The cofactor is Mg(2+).

It carries out the reaction (2E)-geranyl diphosphate + S-adenosyl-L-methionine = (E)-2-methylgeranyl diphosphate + S-adenosyl-L-homocysteine + H(+). Functionally, catalyzes the SAM-dependent methylation of geranyl diphosphate (GPP) to yield (E)-2-methylgeranyl diphosphate (2-MeGPP). The protein is Geranyl diphosphate 2-C-methyltransferase (gdpmt) of Streptomyces lasalocidi (Streptomyces lasaliensis).